We begin with the raw amino-acid sequence, 228 residues long: 2,3-bisphosphoglycerate-dependent phosphoglycerate mutase (228 aa).

Substrate is bound by residues 8–15 (RHGQSVWN), 21–22 (TG), Arg60, 87–90 (ERHY), Lys98, 114–115 (RR), and 183–184 (GN). The Tele-phosphohistidine intermediate role is filled by His9. The Proton donor/acceptor role is filled by Glu87.

The protein belongs to the phosphoglycerate mutase family. BPG-dependent PGAM subfamily.

The catalysed reaction is (2R)-2-phosphoglycerate = (2R)-3-phosphoglycerate. It participates in carbohydrate degradation; glycolysis; pyruvate from D-glyceraldehyde 3-phosphate: step 3/5. In terms of biological role, catalyzes the interconversion of 2-phosphoglycerate and 3-phosphoglycerate. This chain is 2,3-bisphosphoglycerate-dependent phosphoglycerate mutase, found in Staphylococcus saprophyticus subsp. saprophyticus (strain ATCC 15305 / DSM 20229 / NCIMB 8711 / NCTC 7292 / S-41).